Reading from the N-terminus, the 276-residue chain is Large ribosomal subunit protein uL2 (276 aa).

The segment at 219-276 is disordered; sequence TVRGSAMNPNDHPHGGGEGRSPIGRPSPVTPWGKPALGYKTRKKNKHSDKFIVTGRKR.

This sequence belongs to the universal ribosomal protein uL2 family. In terms of assembly, part of the 50S ribosomal subunit. Forms a bridge to the 30S subunit in the 70S ribosome.

In terms of biological role, one of the primary rRNA binding proteins. Required for association of the 30S and 50S subunits to form the 70S ribosome, for tRNA binding and peptide bond formation. It has been suggested to have peptidyltransferase activity; this is somewhat controversial. Makes several contacts with the 16S rRNA in the 70S ribosome. The protein is Large ribosomal subunit protein uL2 of Alkaliphilus metalliredigens (strain QYMF).